A 232-amino-acid chain; its full sequence is Large ribosomal subunit protein uL1 (232 aa).

Belongs to the universal ribosomal protein uL1 family. As to quaternary structure, part of the 50S ribosomal subunit.

Its function is as follows. Binds directly to 23S rRNA. The L1 stalk is quite mobile in the ribosome, and is involved in E site tRNA release. In terms of biological role, protein L1 is also a translational repressor protein, it controls the translation of the L11 operon by binding to its mRNA. The polypeptide is Large ribosomal subunit protein uL1 (Ruegeria pomeroyi (strain ATCC 700808 / DSM 15171 / DSS-3) (Silicibacter pomeroyi)).